The following is a 478-amino-acid chain: H(+)/Cl(-) exchange transporter ClcA (478 aa).

Topologically, residues 1 to 32 (MTHSTQQLSPEGVAEGKRGRLIRELVNRDKTP) are cytoplasmic. Residues 33–69 (LIILIMAAVVGVVTGLLGVAFDRGVDWVQQQRLLALA) form a helical membrane-spanning segment. The Periplasmic portion of the chain corresponds to 70–76 (NVADSAL). The chain crosses the membrane as a helical span at residues 77 to 100 (LVWPLAFIMSALLAMMGYFLVSRF). The Selectivity filter part_1 motif lies at 106 to 110 (GSGIP). Position 107 (Ser107) interacts with chloride. Positions 109–116 (IPEIEGAM) form an intramembrane region, helical. Residues 117-123 (EEMRPVR) are Cytoplasmic-facing. The next 2 helical transmembrane spans lie at 124-141 (WWRV…TLGA) and 148-166 (EGPM…VDIF). Positions 146-150 (GREGP) match the Selectivity filter part_2 motif. Over 167-176 (RLRSPEARHS) the chain is Cytoplasmic. 2 consecutive intramembrane regions (helical) follow at residues 177–189 (LLAT…LSAA) and 193–201 (PLAGILFVI). Topologically, residues 202-214 (EEMRSQFRYSLVS) are cytoplasmic. The helical transmembrane segment at 215–232 (IKAVFIGVITSTIVYRYF) threads the bilayer. Residues 233 to 252 (NGERAIIEVGKLSDAPLNTL) are Periplasmic-facing. A helical membrane pass occupies residues 253–281 (WLYLLLGIIFGAVGVIFNALIFRTQDMFV). At 282 to 287 (RFHGGD) the chain is on the cytoplasmic side. A helical transmembrane segment spans residues 288–309 (WRKLVLIGGLLGGMCGLLALLH). At 310–329 (GNAVGGGFALIPIAAAGNFS) the chain is on the periplasmic side. 2 helical membrane-spanning segments follow: residues 330 to 349 (IGML…LCFG) and 355 to 376 (GIFA…LSCA). Positions 355-359 (GIFAP) match the Selectivity filter part_3 motif. Residues Ile356 and Phe357 each contribute to the chloride site. Residues 377 to 386 (HFFPQYGIEA) lie on the Periplasmic side of the membrane. The segment at residues 387 to 401 (GTFAIAGMGALFAAS) is an intramembrane region (helical). Residues 402 to 404 (VRA) constitute an intramembrane region (note=Loop between two helices). Residues 405-416 (PLTGIVLVLEMT) constitute an intramembrane region (helical). The note=Loop between two helices intramembrane region spans 417-421 (DNYQL). A helical membrane pass occupies residues 422–438 (ILPMIVTCLGATLIAQF). The Cytoplasmic segment spans residues 439-478 (MGGKPLYSAILARTLAKQEQARATVIAQEPAVENTPQTGR). Tyr445 is a chloride binding site.

The protein belongs to the chloride channel (TC 2.A.49) family. ClcA subfamily. Homodimer.

The protein resides in the cell inner membrane. It catalyses the reaction 2 chloride(in) + H(+)(out) = 2 chloride(out) + H(+)(in). In terms of biological role, proton-coupled chloride transporter. Functions as antiport system and exchanges two chloride ions for 1 proton. Probably acts as an electrical shunt for an outwardly-directed proton pump that is linked to amino acid decarboxylation, as part of the extreme acid resistance (XAR) response. The chain is H(+)/Cl(-) exchange transporter ClcA from Yersinia pseudotuberculosis serotype IB (strain PB1/+).